The following is an 842-amino-acid chain: MSRWLSLLLFAVQAVGGYEAGEELSCKRRHGGIPLPLGVFTVQKEGFPDALPAIRTALSHVHSRSCILQGYRLEMIVKDTHCKTSQGMKALFDLIASRPRPVAILGGQCTEVNEPIAMALKYWQIVQLSYAETHAKFASSDSHELFTTFFRVVPGSRNTNMAKCKFVNHFGWKRVGTVKQNDQPRYALPHEALTTRLEHGFGVKIVHTAGVNWEQIETVGGELDELKERDVRIILVDVDEEMAATVLCAGYHRGMYGDNYVWILPGYHSDKWLNQTHDNCTVEEMREAAKNHFSVEFALTRRDVDTKIVGNTRAGDVWNEITQLDPNNTWRGYLYDGLWTLAIALSHSMGDNAEFSHHKMMEAIDNSSFQGLTGKVKFANNERLGLVDIKQWSDGQYVPFAVYDGADDEFKIIDSTTKGWSPPLDSTITERRREHISSILFLAMSLLALIGIFLALIFLLINFRYRNHRFIKMSSPNLNNIIIAGSICTFASVIMLGLDTRIVSPDVFVWLCYTKTWTLCIGFTLSFGAMFSKTWRVHSIFTNIRMDRKAIKDSKLFIILGILLFIDICVLVTWAFVSPFSYTVTELPHIPEDNIVIIPEVEKCNSSHSGVFQAVLYAVKGVLMILGCFLAWETRHVNVPALNDSKYIGTSVYCCVVMSVLGLSTSVILQERVNEMFSLASFFVIFSTTLTLCLVFVPKVIELARNPVGNEPRAYRRGLMKSVVAKTSQPMSPQPRSDSSGDLIGKAESENKLRRRYLHQKSTQLWDLVEKLRAQGDTRFLQQEWCLSSASPSSQERETSLLLRQPSSSNNREETSLTAAGPNGERSSDWPWVDPDEPSTKL.

An N-terminal signal peptide occupies residues 1–17; sequence MSRWLSLLLFAVQAVGG. Topologically, residues 18–438 are extracellular; sequence YEAGEELSCK…TERRREHISS (421 aa). N-linked (GlcNAc...) asparagine glycosylation is found at Asn-274, Asn-279, Asn-327, and Asn-366. A helical membrane pass occupies residues 439–459; sequence ILFLAMSLLALIGIFLALIFL. Residues 460-477 lie on the Cytoplasmic side of the membrane; that stretch reads LINFRYRNHRFIKMSSPN. Residues 478-498 traverse the membrane as a helical segment; sequence LNNIIIAGSICTFASVIMLGL. Residues 499–506 are Extracellular-facing; it reads DTRIVSPD. Residues 507–527 form a helical membrane-spanning segment; it reads VFVWLCYTKTWTLCIGFTLSF. Topologically, residues 528-556 are cytoplasmic; that stretch reads GAMFSKTWRVHSIFTNIRMDRKAIKDSKL. The helical transmembrane segment at 557-577 threads the bilayer; it reads FIILGILLFIDICVLVTWAFV. Residues 578–610 lie on the Extracellular side of the membrane; that stretch reads SPFSYTVTELPHIPEDNIVIIPEVEKCNSSHSG. An N-linked (GlcNAc...) asparagine glycan is attached at Asn-605. A helical membrane pass occupies residues 611–631; that stretch reads VFQAVLYAVKGVLMILGCFLA. The Cytoplasmic segment spans residues 632 to 647; that stretch reads WETRHVNVPALNDSKY. A helical membrane pass occupies residues 648 to 668; it reads IGTSVYCCVVMSVLGLSTSVI. Residues 669–676 are Extracellular-facing; that stretch reads LQERVNEM. A helical membrane pass occupies residues 677–697; it reads FSLASFFVIFSTTLTLCLVFV. The Cytoplasmic segment spans residues 698–842; the sequence is PKVIELARNP…VDPDEPSTKL (145 aa). Residues 725-740 are compositionally biased toward polar residues; sequence AKTSQPMSPQPRSDSS. Disordered stretches follow at residues 725-744 and 791-842; these read AKTS…GDLI and SPSS…STKL.

It belongs to the G-protein coupled receptor 3 family. In terms of assembly, may form a heterodimer with gbb-1. As to expression, expressed in cholinergic motor neurons.

It localises to the cell membrane. In terms of biological role, component of a heterodimeric G-protein coupled receptor for GABA, formed by gbb-1 and gbb-2. Within the heterodimeric GABA receptor, only gbb-1 seems to bind agonists, while gbb-2 mediates coupling to G proteins. Ligand binding causes a conformation change that triggers signaling via guanine nucleotide-binding proteins (G proteins) and modulates the activity of down-stream effectors, such as adenylate cyclase. Signaling inhibits adenylate cyclase, stimulates phospholipase A2, activates potassium channels, inactivates voltage-dependent calcium-channels and modulates inositol phospholipid hydrolysis. Plays a critical role in the fine-tuning of inhibitory synaptic transmission. Pre-synaptic GABA receptor inhibits neurotransmitter release by down-regulating high-voltage activated calcium channels, whereas postsynaptic GABA receptor decreases neuronal excitability by activating a prominent inwardly rectifying potassium (Kir) conductance that underlies the late inhibitory postsynaptic potentials. Along with gbb-1, may couple to the G(o)-alpha G-protein goa-1 to negatively regulate cholinergic receptor activity in the presence of high levels of acetylcholine in ventral cord motor neurons. As acetylcholine depolarizes body wall muscles, modulation of acetylcholine levels most likely results in the control of locomotory behavior. Regulates locomotory behavior in response to GABA release by GABAergic motor neurons. The protein is Gamma-aminobutyric acid type B receptor subunit 2 of Caenorhabditis elegans.